A 124-amino-acid polypeptide reads, in one-letter code: Ubiquitin-related modifier 1 (124 aa).

The tract at residues 34–53 (IPSLVPKDNTTSAKNPPPKD) is disordered. A 1-thioglycine modification is found at Gly124. Gly124 is covalently cross-linked (Glycyl lysine isopeptide (Gly-Lys) (interchain with K-? in acceptor proteins)).

The protein belongs to the URM1 family. C-terminal thiocarboxylation occurs in 2 steps, it is first acyl-adenylated (-COAMP) via the hesA/moeB/thiF part of UBA4, then thiocarboxylated (-COSH) via the rhodanese domain of UBA4.

It is found in the cytoplasm. It functions in the pathway tRNA modification; 5-methoxycarbonylmethyl-2-thiouridine-tRNA biosynthesis. Its function is as follows. Acts as a sulfur carrier required for 2-thiolation of mcm(5)S(2)U at tRNA wobble positions of cytosolic tRNA(Lys), tRNA(Glu) and tRNA(Gln). Serves as sulfur donor in tRNA 2-thiolation reaction by being thiocarboxylated (-COSH) at its C-terminus by the MOCS3 homolog UBA4. The sulfur is then transferred to tRNA to form 2-thiolation of mcm(5)S(2)U. Prior mcm(5) tRNA modification by the elongator complex is required for 2-thiolation. Also acts as a ubiquitin-like protein (UBL) that is covalently conjugated via an isopeptide bond to lysine residues of target proteins such as AHP1. The thiocarboxylated form serves as substrate for conjugation and oxidative stress specifically induces the formation of UBL-protein conjugates. The polypeptide is Ubiquitin-related modifier 1 (Coprinopsis cinerea (strain Okayama-7 / 130 / ATCC MYA-4618 / FGSC 9003) (Inky cap fungus)).